The primary structure comprises 428 residues: GTPase Obg (428 aa).

Residues 1-158 form the Obg domain; it reads MFVDQVKVYV…RYIVLELKVL (158 aa). The interval 117-143 is disordered; it reads AKGGRGGRGNTRFATPANPAPQLSEHG. One can recognise an OBG-type G domain in the interval 159 to 329; that stretch reads ADVGLVGFPS…LLFEVANQLE (171 aa). GTP contacts are provided by residues 165-172, 190-194, 212-215, 282-285, and 310-312; these read GFPSVGKS, FTTLV, DLPG, NKMD, and SAV. Mg(2+) contacts are provided by Ser-172 and Thr-192. The region spanning 350–428 is the OCT domain; sequence TMEDEEIPFN…LLEFEFEFID (79 aa).

The protein belongs to the TRAFAC class OBG-HflX-like GTPase superfamily. OBG GTPase family. Monomer. It depends on Mg(2+) as a cofactor.

The protein resides in the cytoplasm. Its function is as follows. An essential GTPase which binds GTP, GDP and possibly (p)ppGpp with moderate affinity, with high nucleotide exchange rates and a fairly low GTP hydrolysis rate. Plays a role in control of the cell cycle, stress response, ribosome biogenesis and in those bacteria that undergo differentiation, in morphogenesis control. The sequence is that of GTPase Obg from Bacillus velezensis (strain DSM 23117 / BGSC 10A6 / LMG 26770 / FZB42) (Bacillus amyloliquefaciens subsp. plantarum).